Consider the following 448-residue polypeptide: Thymidine phosphorylase (448 aa).

This sequence belongs to the thymidine/pyrimidine-nucleoside phosphorylase family. Homodimer.

It carries out the reaction thymidine + phosphate = 2-deoxy-alpha-D-ribose 1-phosphate + thymine. The protein operates within pyrimidine metabolism; dTMP biosynthesis via salvage pathway; dTMP from thymine: step 1/2. The enzymes which catalyze the reversible phosphorolysis of pyrimidine nucleosides are involved in the degradation of these compounds and in their utilization as carbon and energy sources, or in the rescue of pyrimidine bases for nucleotide synthesis. The sequence is that of Thymidine phosphorylase from Vibrio cholerae serotype O1 (strain ATCC 39315 / El Tor Inaba N16961).